The primary structure comprises 148 residues: Large ribosomal subunit protein uL15 (148 aa).

Residues 1-46 (MITIEDLKPTPGSNKKYKRLGRGQGSGKGKTAGKGHKGQKSRGTGK) are disordered. The segment covering 31-45 (TAGKGHKGQKSRGTG) has biased composition (basic residues).

The protein belongs to the universal ribosomal protein uL15 family. In terms of assembly, part of the 50S ribosomal subunit.

Binds to the 23S rRNA. This Fervidobacterium nodosum (strain ATCC 35602 / DSM 5306 / Rt17-B1) protein is Large ribosomal subunit protein uL15.